Consider the following 31-residue polypeptide: Cytochrome b6-f complex subunit 6 (31 aa).

Residues 4-24 form a helical membrane-spanning segment; that stretch reads IISYFGFLFGALTLALILFIG.

Belongs to the PetL family. As to quaternary structure, the 4 large subunits of the cytochrome b6-f complex are cytochrome b6, subunit IV (17 kDa polypeptide, PetD), cytochrome f and the Rieske protein, while the 4 small subunits are PetG, PetL, PetM and PetN. The complex functions as a dimer.

The protein resides in the plastid. It localises to the chloroplast thylakoid membrane. Functionally, component of the cytochrome b6-f complex, which mediates electron transfer between photosystem II (PSII) and photosystem I (PSI), cyclic electron flow around PSI, and state transitions. PetL is important for photoautotrophic growth as well as for electron transfer efficiency and stability of the cytochrome b6-f complex. This Physcomitrium patens (Spreading-leaved earth moss) protein is Cytochrome b6-f complex subunit 6.